A 46-amino-acid polypeptide reads, in one-letter code: Light-harvesting protein B-800/850 beta 1 chain (46 aa).

The Cytoplasmic portion of the chain corresponds to 2 to 19; that stretch reads AERSLSGLTEEEAIAVHD. The a bacteriochlorophyll site is built by His18 and His36. A helical membrane pass occupies residues 20-42; sequence QFKTTFSAFIILAAVAHVLVWVW. Residues 43–46 are Periplasmic-facing; sequence KPWF.

Belongs to the antenna complex beta subunit family. As to quaternary structure, the core complex is formed by different alpha and beta chains, binding bacteriochlorophyll molecules, and arranged most probably in tetrameric structures disposed around the reaction center.

It is found in the cell inner membrane. Functionally, antenna complexes are light-harvesting systems, which transfer the excitation energy to the reaction centers. In Magnetospirillum molischianum (Rhodospirillum molischianum), this protein is Light-harvesting protein B-800/850 beta 1 chain (B1).